Consider the following 229-residue polypeptide: Cytidylate kinase (229 aa).

12–20 (GPSGTGKSS) is a binding site for ATP.

Belongs to the cytidylate kinase family. Type 1 subfamily.

The protein localises to the cytoplasm. The catalysed reaction is CMP + ATP = CDP + ADP. The enzyme catalyses dCMP + ATP = dCDP + ADP. The sequence is that of Cytidylate kinase from Rhodococcus jostii (strain RHA1).